The sequence spans 270 residues: 4-hydroxy-tetrahydrodipicolinate reductase (270 aa).

NAD(+) is bound by residues 11-16 (GAGGRM) and E37. R38 serves as a coordination point for NADP(+). Residues 101-103 (GTT) and 125-128 (APNM) contribute to the NAD(+) site. The Proton donor/acceptor role is filled by H158. Position 159 (H159) interacts with (S)-2,3,4,5-tetrahydrodipicolinate. K162 serves as the catalytic Proton donor. Position 168-169 (168-169 (GT)) interacts with (S)-2,3,4,5-tetrahydrodipicolinate.

Belongs to the DapB family.

Its subcellular location is the cytoplasm. It carries out the reaction (S)-2,3,4,5-tetrahydrodipicolinate + NAD(+) + H2O = (2S,4S)-4-hydroxy-2,3,4,5-tetrahydrodipicolinate + NADH + H(+). It catalyses the reaction (S)-2,3,4,5-tetrahydrodipicolinate + NADP(+) + H2O = (2S,4S)-4-hydroxy-2,3,4,5-tetrahydrodipicolinate + NADPH + H(+). The protein operates within amino-acid biosynthesis; L-lysine biosynthesis via DAP pathway; (S)-tetrahydrodipicolinate from L-aspartate: step 4/4. Functionally, catalyzes the conversion of 4-hydroxy-tetrahydrodipicolinate (HTPA) to tetrahydrodipicolinate. The sequence is that of 4-hydroxy-tetrahydrodipicolinate reductase from Shewanella oneidensis (strain ATCC 700550 / JCM 31522 / CIP 106686 / LMG 19005 / NCIMB 14063 / MR-1).